Consider the following 666-residue polypeptide: Probable cytochrome c oxidase subunit 1 (666 aa).

2 helical membrane-spanning segments follow: residues 16 to 36 (IPLI…VWVV) and 57 to 77 (IGVM…SDAI). Heme b is bound at residue histidine 105. 13 consecutive transmembrane segments (helical) span residues 108 to 128 (IMIF…VVPL), 142 to 162 (SVGF…LVIG), 192 to 212 (SLQI…TTVL), 234 to 254 (SNLL…MLLL), 277 to 297 (LIWA…FGIF), 315 to 335 (MVLA…HHFF), 346 to 366 (IFGI…YNWL), 380 to 400 (MLWA…GVLV), 413 to 433 (MFLV…GAFA), 456 to 476 (FWFT…AGML), 493 to 513 (WMLV…CQIM), 591 to 611 (SPTG…LIWH), and 612 to 632 (IWWM…VFAW). Histidine 283, tyrosine 287, histidine 332, and histidine 333 together coordinate Cu cation. The 1'-histidyl-3'-tyrosine (His-Tyr) cross-link spans 283–287 (HPEVY). Heme b contacts are provided by histidine 418 and histidine 420.

The protein belongs to the heme-copper respiratory oxidase family.

It localises to the cell membrane. The catalysed reaction is 4 Fe(II)-[cytochrome c] + O2 + 8 H(+)(in) = 4 Fe(III)-[cytochrome c] + 2 H2O + 4 H(+)(out). The protein operates within energy metabolism; oxidative phosphorylation. This chain is Probable cytochrome c oxidase subunit 1, found in Bradyrhizobium diazoefficiens (strain JCM 10833 / BCRC 13528 / IAM 13628 / NBRC 14792 / USDA 110).